Here is a 291-residue protein sequence, read N- to C-terminus: ATP synthase gamma chain (291 aa).

This sequence belongs to the ATPase gamma chain family. As to quaternary structure, F-type ATPases have 2 components, CF(1) - the catalytic core - and CF(0) - the membrane proton channel. CF(1) has five subunits: alpha(3), beta(3), gamma(1), delta(1), epsilon(1). CF(0) has three main subunits: a, b and c.

Its subcellular location is the cell inner membrane. In terms of biological role, produces ATP from ADP in the presence of a proton gradient across the membrane. The gamma chain is believed to be important in regulating ATPase activity and the flow of protons through the CF(0) complex. The sequence is that of ATP synthase gamma chain from Pelagibacter ubique (strain HTCC1062).